Reading from the N-terminus, the 190-residue chain is Ohanin (190 aa).

The first 20 residues, 1 to 20 (MLLFTLCFFADQENGGKALA), serve as a signal peptide directing secretion. A B30.2/SPRY domain is found at 21–127 (SPPGNWQKAD…RIWQKGLWWL (107 aa)). The propeptide occupies 128-190 (RRLETDSDKL…IGARVSLANL (63 aa)).

In terms of tissue distribution, expressed by the venom gland.

Its subcellular location is the secreted. In terms of biological role, neurotoxin that produces dose-dependent hypolocomotion and hyperalgesia in mice. May directly act on the central nervous system, as it is 6500-fold more potent when administered intracerebroventricularly than intraperitoneal. The chain is Ohanin from Ophiophagus hannah (King cobra).